Here is a 313-residue protein sequence, read N- to C-terminus: Protoheme IX farnesyltransferase (313 aa).

9 helical membrane passes run 33 to 53 (IALM…PVML), 59 to 79 (MPSW…AGSA), 107 to 127 (VEPA…TLMF), 129 to 149 (LLVN…YVFV), 162 to 182 (IVIG…AVTG), 188 to 208 (AVLL…ALAI), 212 to 232 (DDYA…EVVT), 252 to 272 (VADI…WFVA), and 292 to 312 (LFHM…AAAL).

The protein belongs to the UbiA prenyltransferase family. Protoheme IX farnesyltransferase subfamily.

The protein resides in the cell membrane. The catalysed reaction is heme b + (2E,6E)-farnesyl diphosphate + H2O = Fe(II)-heme o + diphosphate. It functions in the pathway porphyrin-containing compound metabolism; heme O biosynthesis; heme O from protoheme: step 1/1. Functionally, converts heme B (protoheme IX) to heme O by substitution of the vinyl group on carbon 2 of heme B porphyrin ring with a hydroxyethyl farnesyl side group. The chain is Protoheme IX farnesyltransferase from Parafrankia sp. (strain EAN1pec).